A 132-amino-acid polypeptide reads, in one-letter code: Phycocyanin PC645 alpha-1 subunit (132 aa).

(2R,3E)-phycocyanobilin-binding residues include Asp54 and Arg68. 4 residues coordinate mesobiliverdin: Cys70, Gln76, Tyr77, and Lys92. 15,16-dihydrobiliverdin is bound by residues Pro123 and Ile125.

Belongs to the phycoerythrin family. As to quaternary structure, heterotetramer of 2 different alpha chains and 2 identical beta chains which form 2 alpha-beta heterodimers within the heterotetramer. Post-translationally, contains two phycocyanobilin chromophores, one mesobiliverdin chromophore and one 15,16-dihydrobiliverdin chromophore with binding mediated by both the alpha and beta subunits.

The protein localises to the plastid. Its subcellular location is the chloroplast thylakoid membrane. Its function is as follows. Light-harvesting photosynthetic tetrapyrrole chromophore-protein from the phycobiliprotein complex. This chain is Phycocyanin PC645 alpha-1 subunit, found in Chroomonas sp. (strain CCMP270).